A 232-amino-acid polypeptide reads, in one-letter code: MDKAQQDALKKAAGIEAAKLVENGMIAGLGTGSTVKFLVDELGRRHQEEGLEFTGVTTSRRTQVQAESYGIKIVDIDDVDHIDVTIDGADEVDKNFNGIKGGGAALLWEKIVATNSNQIVWIVDESKVVDTIGKFPLPVEVIPFGAGQVIKKFEARGYKPVLRLDADGKEVRTDENNFVVDLHLERIDHPQELAEDLINTVGVVEHGLFLNMVDKVIVGDPNGPRVMTNANK.

Substrate-binding positions include 31-34, 87-90, and 100-103; these read TGST, DGAD, and KGGG. E109 (proton acceptor) is an active-site residue. K127 lines the substrate pocket.

This sequence belongs to the ribose 5-phosphate isomerase family. In terms of assembly, homodimer.

It catalyses the reaction aldehydo-D-ribose 5-phosphate = D-ribulose 5-phosphate. It functions in the pathway carbohydrate degradation; pentose phosphate pathway; D-ribose 5-phosphate from D-ribulose 5-phosphate (non-oxidative stage): step 1/1. In terms of biological role, catalyzes the reversible conversion of ribose-5-phosphate to ribulose 5-phosphate. The sequence is that of Ribose-5-phosphate isomerase A from Bifidobacterium longum (strain DJO10A).